Reading from the N-terminus, the 105-residue chain is Protein LBH (105 aa).

The LBH domain maps to M18–E104. A Phosphoserine modification is found at S63. Over residues L86–E96 the composition is skewed to acidic residues. Positions L86–Q105 are disordered.

It belongs to the LBH family. As to expression, highly expressed in heart, and expressed at low levels in placenta, lung, skeletal muscle, kidney and liver.

It localises to the nucleus. The protein resides in the cytoplasm. Its function is as follows. Transcriptional activator which may act in mitogen-activated protein kinase signaling pathway. The sequence is that of Protein LBH from Homo sapiens (Human).